The primary structure comprises 92 residues: Small ribosomal subunit protein uS19 (92 aa).

It belongs to the universal ribosomal protein uS19 family.

Functionally, protein S19 forms a complex with S13 that binds strongly to the 16S ribosomal RNA. The polypeptide is Small ribosomal subunit protein uS19 (Limosilactobacillus reuteri (strain DSM 20016) (Lactobacillus reuteri)).